We begin with the raw amino-acid sequence, 224 residues long: MHLHYDLPYPKHDMTDEPVSFFTYPPDSDTKFIPKDPCVHKPLSIKQVMERKLHWITLGGQYDWTNRVYPGERPPEFPRDVAGLLETLFPETLAQAAIVNFYTPGDTMMMHRDVSEETDKGLVSLSMGCDALFMIAPNDVGKMSEEDRPGHGEKEHLLLRIRSGDAIYMTQEARYAWHGVPKVLKGTCPDYLEDWPAEDGKYEEWQGWMKNKRINLNVRQMRDC.

Positions 93–222 constitute a Fe2OG dioxygenase domain; that stretch reads LAQAAIVNFY…RINLNVRQMR (130 aa). Residues His-111, Asp-113, and His-178 each contribute to the Fe cation site. Arg-213 provides a ligand contact to 2-oxoglutarate.

Belongs to the alkB family. Requires Fe(2+) as cofactor.

The catalysed reaction is an N(6)-methyladenosine in mRNA + 2-oxoglutarate + O2 = an adenosine in mRNA + formaldehyde + succinate + CO2. Its function is as follows. RNA demethylase that regulates the stability of mRNAs through an m(6)A-dependent manner. M6A is a modification present at internal sites of mRNAs and some non-coding RNAs and plays a role in mRNA stability and processing. Demethylate m6A at position A1935 within the 3'UTR of transcription factor ZAP1 and plays an important role in C.parasitica development and virulence. Target mRNAs are primarily associated with amino-acid biosynthesis, 2-oxocarboxylic acid metabolism, and ABC transporters, as well as alpha-amino acid metabolism, small-molecule biosynthesis, and the sulfite reductase complex (NADPH). This Cryphonectria parasitica (strain ATCC 38755 / EP155) protein is N6-methyladenosine RNA demethylase ALKBH.